Reading from the N-terminus, the 553-residue chain is Mothers against decapentaplegic homolog 4 (553 aa).

A mediates interaction with ZBTB7A region spans residues 1-323; the sequence is MDNMSITNTP…PISNHPAPEY (323 aa). Residues 18–142 enclose the MH1 domain; that stretch reads SIVHSLMCHR…YERVVSPGID (125 aa). N6-acetyllysine is present on K37. Residues 44–69 are required for interaction with TSC22D1; the sequence is VKKLKEKKDELDSLITAITTNGAHPS. A Zn(2+)-binding site is contributed by C71. K113 is covalently cross-linked (Glycyl lysine isopeptide (Lys-Gly) (interchain with G-Cter in SUMO2)). The Zn(2+) site is built by C115, C127, and H132. The tract at residues 168-194 is disordered; sequence GQPSLSTEGHSIQTIQHPPSNRASTET. Over residues 170–194 the composition is skewed to polar residues; the sequence is PSLSTEGHSIQTIQHPPSNRASTET. The SAD stretch occupies residues 275–321; it reads PYTPNLPHHQNGHLQHHPPMPPHPGHYWPPVHNELAFQPPISNHPAP. The region spanning 324–553 is the MH2 domain; that stretch reads WCSIAYFEMD…MPIADPQPLD (230 aa). An N6-acetyllysine mark is found at K429 and K508. Residue K520 forms a Glycyl lysine isopeptide (Lys-Gly) (interchain with G-Cter in ubiquitin) linkage.

This sequence belongs to the dwarfin/SMAD family. As to quaternary structure, monomer; in the absence of TGF-beta activation. Heterotrimer; on TGF-beta activation. Heterotrimer composed of two molecules of a C-terminally phosphorylated R-SMAD molecule, SMAD2 or SMAD3, and one molecule of SMAD4 to form the transcriptional active SMAD2/SMAD3-SMAD4 complex. Found in a ternary complex composed of SMAD4, STK11/LKB1 and STK11IP. Found in a complex with SMAD1 and YY1. Identified in a complex that contains at least ZNF451, SMAD2, SMAD3 and SMAD4. Interacts with ATF2, COPS5, DACH1, MSG1, SKI, STK11/LKB1, STK11IP and TRIM33. Associates with ZNF423 or ZNF521 in response to BMP2 leading to activate transcription of BMP target genes. Interacts with USP9X. Interacts with RBPMS. Interacts with WWTR1 (via coiled-coil domain). Interacts with CITED1 and CITED2. Interacts with PDPK1 (via PH domain). Interacts with VPS39; this interaction affects heterodimer formation with SMAD3, but not with SMAD2, and leads to inhibition of SMAD3-dependent transcription activation. Interactions with VPS39 and SMAD2 may be mutually exclusive. Interacts (via MH2 domain) with ZNF451 (via N-terminal zinc-finger domains). Interacts with ZC3H3. Interacts weakly with ZNF8. Interacts with NUP93 and IPO7; translocates SMAD4 to the nucleus through the NPC upon BMP7 stimulation resulting in activation of SMAD4 signaling. Interacts with CREB3L1, the interaction takes place upon TGFB1 induction and SMAD4 acts as a CREB3L1 coactivator to induce the expression of genes involved in the assembly of collagen extracellular matrix. Interacts with DLX1. Interacts with ZBTB7A; the interaction is direct and stimulated by TGFB1. Interacts with CREBBP; the recruitment of this transcriptional coactivator is negatively regulated by ZBTB7A. Interacts with EP300; the interaction with this transcriptional coactivator is negatively regulated by ZBTB7A. Interacts with HDAC1. Interacts (via MH2 domain) with ZMIZ1 (via SP-RING-type domain); in the TGF-beta signaling pathway increases the activity of the SMAD3/SMAD4 transcriptional complex. Interacts (via N-terminus) with TSC22D1. Monoubiquitinated on Lys-520 by E3 ubiquitin-protein ligase TRIM33. Monoubiquitination hampers its ability to form a stable complex with activated SMAD2/3 resulting in inhibition of TGF-beta/BMP signaling cascade. In terms of processing, phosphorylated by PDPK1.

It is found in the cytoplasm. The protein localises to the nucleus. Its function is as follows. Common SMAD (co-SMAD) is the coactivator and mediator of signal transduction by TGF-beta (transforming growth factor). Component of the heterotrimeric SMAD2/SMAD3-SMAD4 complex that forms in the nucleus and is required for the TGF-mediated signaling. Promotes binding of the SMAD2/SMAD4/FAST-1 complex to DNA and provides an activation function required for SMAD1 or SMAD2 to stimulate transcription. Component of the multimeric SMAD3/SMAD4/JUN/FOS complex which forms at the AP1 promoter site; required for synergistic transcriptional activity in response to TGF-beta. Acts synergistically with SMAD1 and YY1 in bone morphogenetic protein (BMP)-mediated cardiac-specific gene expression. Binds to SMAD binding elements (SBEs) (5'-GTCT/AGAC-3') within BMP response element (BMPRE) of cardiac activating regions. May act as a tumor suppressor. Positively regulates PDPK1 kinase activity by stimulating its dissociation from the 14-3-3 protein YWHAQ which acts as a negative regulator. In muscle physiology, plays a central role in the balance between atrophy and hypertrophy. When recruited by MSTN, promotes atrophy response via phosphorylated SMAD2/4. MSTN decrease causes SMAD4 release and subsequent recruitment by the BMP pathway to promote hypertrophy via phosphorylated SMAD1/5/8. The polypeptide is Mothers against decapentaplegic homolog 4 (SMAD4) (Bos taurus (Bovine)).